A 177-amino-acid polypeptide reads, in one-letter code: Adenine phosphoribosyltransferase (177 aa).

This sequence belongs to the purine/pyrimidine phosphoribosyltransferase family. In terms of assembly, homodimer.

It is found in the cytoplasm. It catalyses the reaction AMP + diphosphate = 5-phospho-alpha-D-ribose 1-diphosphate + adenine. The protein operates within purine metabolism; AMP biosynthesis via salvage pathway; AMP from adenine: step 1/1. Functionally, catalyzes a salvage reaction resulting in the formation of AMP, that is energically less costly than de novo synthesis. This chain is Adenine phosphoribosyltransferase, found in Leuconostoc citreum (strain KM20).